The following is a 353-amino-acid chain: Guanine nucleotide-binding protein subunit alpha (353 aa).

The tract at residues 1–21 (MGCGMSTEEKEGKARNEEIEN) is disordered. A lipid anchor (N-myristoyl glycine) is attached at Gly-2. The S-palmitoyl cysteine moiety is linked to residue Cys-3. Basic and acidic residues predominate over residues 7-21 (TEEKEGKARNEEIEN). The 322-residue stretch at 32–353 (NEIKMLLLGA…QENLRLCGLI (322 aa)) folds into the G-alpha domain. The segment at 35-48 (KMLLLGAGESGKST) is G1 motif. Positions 43, 44, 45, 46, 47, 48, 150, 175, 181, 203, 269, 270, 272, and 325 each coordinate GTP. Ser-47 serves as a coordination point for Mg(2+). The segment at 173–181 (DVLRSRVKT) is G2 motif. Thr-181 lines the Mg(2+) pocket. The interval 196 to 205 (YRMFDVGGQR) is G3 motif. The interval 265 to 272 (ILFLNKID) is G4 motif. The segment at 323-328 (TCATDT) is G5 motif.

This sequence belongs to the G-alpha family. G(q) subfamily. G proteins are composed of 3 units; alpha, beta and gamma. The alpha chain contains the guanine nucleotide binding site. The cofactor is Mg(2+).

Guanine nucleotide-binding proteins (G proteins) are involved as modulators or transducers in various transmembrane signaling systems. Plays a role in pathogenicity, specifically in appressorium formation in rice blast disease. Also involved in mating. This is Guanine nucleotide-binding protein subunit alpha (MAGB) from Pyricularia oryzae (strain 70-15 / ATCC MYA-4617 / FGSC 8958) (Rice blast fungus).